A 218-amino-acid chain; its full sequence is Peroxynitrite isomerase 2 (218 aa).

The tract at residues 1-24 (MTPAGDTPERGSGDRAVAEAAERA) is disordered. The segment covering 7–24 (TPERGSGDRAVAEAAERA) has biased composition (basic and acidic residues). Positions 65–71 (GVWRGEG) match the GXWXGXG motif. Positions 181 and 208 each coordinate heme b.

Belongs to the nitrobindin family. Homodimer. The cofactor is heme b.

It carries out the reaction peroxynitrite = nitrate. It participates in nitrogen metabolism. Heme-binding protein able to scavenge peroxynitrite and to protect free L-tyrosine against peroxynitrite-mediated nitration, by acting as a peroxynitrite isomerase that converts peroxynitrite to nitrate. Therefore, this protein likely plays a role in peroxynitrite sensing and in the detoxification of reactive nitrogen and oxygen species (RNS and ROS, respectively). Is able to bind nitric oxide (NO) in vitro, but may act as a sensor of peroxynitrite levels in vivo. The polypeptide is Peroxynitrite isomerase 2 (Mycolicibacterium smegmatis (strain ATCC 700084 / mc(2)155) (Mycobacterium smegmatis)).